The chain runs to 431 residues: Adenylosuccinate synthetase 2 (431 aa).

Residues 13–19 (GDEGKGK) and 41–43 (GHT) contribute to the GTP site. Residue Asp14 is the Proton acceptor of the active site. The Mg(2+) site is built by Asp14 and Gly41. Residues 14-17 (DEGK), 39-42 (NAGH), Thr130, Arg144, Gln225, Thr240, and Arg304 contribute to the IMP site. The active-site Proton donor is the His42. Residue 300 to 306 (SVTGRPR) coordinates substrate. GTP-binding positions include Arg306, 332–334 (KLD), and 414–416 (STG).

It belongs to the adenylosuccinate synthetase family. Homodimer. Mg(2+) serves as cofactor.

It localises to the cytoplasm. The enzyme catalyses IMP + L-aspartate + GTP = N(6)-(1,2-dicarboxyethyl)-AMP + GDP + phosphate + 2 H(+). Its pathway is purine metabolism; AMP biosynthesis via de novo pathway; AMP from IMP: step 1/2. In terms of biological role, plays an important role in the de novo pathway of purine nucleotide biosynthesis. Catalyzes the first committed step in the biosynthesis of AMP from IMP. The protein is Adenylosuccinate synthetase 2 of Chromobacterium violaceum (strain ATCC 12472 / DSM 30191 / JCM 1249 / CCUG 213 / NBRC 12614 / NCIMB 9131 / NCTC 9757 / MK).